Here is a 353-residue protein sequence, read N- to C-terminus: B1 bradykinin receptor (353 aa).

The Extracellular portion of the chain corresponds to 1-40; sequence MASSWPPLELQSSNQSQLFPQNATACDNAPEAWDLLHRVL. N-linked (GlcNAc...) asparagine glycans are attached at residues Asn14 and Asn22. A helical membrane pass occupies residues 41 to 64; that stretch reads PTFIISICFFGLLGNLFVLLVFLL. Residues 65 to 73 lie on the Cytoplasmic side of the membrane; sequence PRRQLNVAE. A helical transmembrane segment spans residues 74–98; sequence IYLANLAASDLVFVLGLPFWAENIW. The Extracellular segment spans residues 99–111; that stretch reads NQFNWPFGALLCR. A disulfide bridge connects residues Cys110 and Cys189. The helical transmembrane segment at 112–133 threads the bilayer; that stretch reads VINGVIKANLFISIFLVVAISQ. At 134-155 the chain is on the cytoplasmic side; it reads DRYRVLVHPMASRRQQRRRQAR. A helical membrane pass occupies residues 156-178; that stretch reads VTCVLIWVVGGLLSIPTFLLRSI. Topologically, residues 179 to 199 are extracellular; the sequence is QAVPDLNITACILLLPHEAWH. Asn185 carries an N-linked (GlcNAc...) asparagine glycan. Residues 200–226 form a helical membrane-spanning segment; sequence FARIVELNILGFLLPLAAIVFFNYHIL. Over 227–247 the chain is Cytoplasmic; the sequence is ASLRTREEVSRTRCGGRKDSK. Residues 248–272 form a helical membrane-spanning segment; that stretch reads TTALILTLVVAFLVCWAPYHFFAFL. Over 273–291 the chain is Extracellular; sequence EFLFQVQAVRGCFWEDFID. A helical transmembrane segment spans residues 292 to 314; sequence LGLQLANFFAFTNSSLNPVIYVF. The Cytoplasmic segment spans residues 315 to 353; that stretch reads VGRLFRTKVWELYKQCTPKSLAPISSSHRKEIFQLFWRN. Cys330 carries S-palmitoyl cysteine lipidation.

The protein belongs to the G-protein coupled receptor 1 family. Bradykinin receptor subfamily. BDKRB1 sub-subfamily.

The protein resides in the cell membrane. This is a receptor for bradykinin. Could be a factor in chronic pain and inflammation. This is B1 bradykinin receptor (BDKRB1) from Homo sapiens (Human).